Consider the following 215-residue polypeptide: Cytochrome b6 (215 aa).

A helical transmembrane segment spans residues 32–52; the sequence is IFYCIGGITFTCFLVQVATGF. Cysteine 35 is a binding site for heme c. Residues histidine 86 and histidine 100 each coordinate heme b. 3 consecutive transmembrane segments (helical) span residues 90-110, 116-136, and 186-206; these read ASMM…TGGF, LTWV…VTGY, and LHTF…FLMI. Residues histidine 187 and histidine 202 each contribute to the heme b site.

The protein belongs to the cytochrome b family. PetB subfamily. As to quaternary structure, the 4 large subunits of the cytochrome b6-f complex are cytochrome b6, subunit IV (17 kDa polypeptide, PetD), cytochrome f and the Rieske protein, while the 4 small subunits are PetG, PetL, PetM and PetN. The complex functions as a dimer. Requires heme b as cofactor. Heme c is required as a cofactor.

The protein resides in the plastid. The protein localises to the chloroplast thylakoid membrane. In terms of biological role, component of the cytochrome b6-f complex, which mediates electron transfer between photosystem II (PSII) and photosystem I (PSI), cyclic electron flow around PSI, and state transitions. This is Cytochrome b6 from Chlorella vulgaris (Green alga).